A 583-amino-acid chain; its full sequence is Orphan steroid hormone receptor 2 (583 aa).

Residues 84 to 159 constitute a DNA-binding region (nuclear receptor); sequence IELCAVCGDK…MGMKSDSVQC (76 aa). 2 NR C4-type zinc fingers span residues 87–107 and 123–142; these read CAVCGDKASGRHYGAISCEGC and CRGNKDCQIIKHNRNRCQYC. One can recognise an NR LBD domain in the interval 248 to 563; that stretch reads TLASVVTSLA…SIIPYILRME (316 aa).

The protein belongs to the nuclear hormone receptor family. NR2 subfamily. As to quaternary structure, binds DNA as a monomer. In terms of tissue distribution, expressed uniformly in the early embryo. In contrast, larval expression is localized to the epaulettes and mouth epithelium. Expressed in multiple adult organs including lantern muscle, tubefeet, intestine, coelomocytes and gonads. In the adult ovaries and testes, expression is specifically localized to the smooth muscle epithelial layer of cells which surround the ovarioles and acini, respectively (at protein level).

Its subcellular location is the cytoplasm. The protein localises to the nucleus. Functionally, orphan nuclear receptor. Binds to the hormone response element in the upstream promoter region of the CYIIIB gene in vitro. Both isoform 1 and isoform 2 bind DNA. The polypeptide is Orphan steroid hormone receptor 2 (Strongylocentrotus purpuratus (Purple sea urchin)).